We begin with the raw amino-acid sequence, 707 residues long: Ribosomal RNA large subunit methyltransferase K/L (707 aa).

The region spanning 44-155 (VIYNLCLWSR…NDILTVSFDL (112 aa)) is the THUMP domain.

It belongs to the methyltransferase superfamily. RlmKL family.

It localises to the cytoplasm. It catalyses the reaction guanosine(2445) in 23S rRNA + S-adenosyl-L-methionine = N(2)-methylguanosine(2445) in 23S rRNA + S-adenosyl-L-homocysteine + H(+). The enzyme catalyses guanosine(2069) in 23S rRNA + S-adenosyl-L-methionine = N(2)-methylguanosine(2069) in 23S rRNA + S-adenosyl-L-homocysteine + H(+). Functionally, specifically methylates the guanine in position 2445 (m2G2445) and the guanine in position 2069 (m7G2069) of 23S rRNA. The chain is Ribosomal RNA large subunit methyltransferase K/L from Legionella pneumophila subsp. pneumophila (strain Philadelphia 1 / ATCC 33152 / DSM 7513).